A 443-amino-acid chain; its full sequence is Xaa-Pro dipeptidase (443 aa).

Mn(2+) contacts are provided by aspartate 246, aspartate 257, histidine 339, glutamate 384, and glutamate 423.

The protein belongs to the peptidase M24B family. Bacterial-type prolidase subfamily. It depends on Mn(2+) as a cofactor.

It catalyses the reaction Xaa-L-Pro dipeptide + H2O = an L-alpha-amino acid + L-proline. In terms of biological role, splits dipeptides with a prolyl residue in the C-terminal position. This is Xaa-Pro dipeptidase from Escherichia fergusonii (strain ATCC 35469 / DSM 13698 / CCUG 18766 / IAM 14443 / JCM 21226 / LMG 7866 / NBRC 102419 / NCTC 12128 / CDC 0568-73).